Reading from the N-terminus, the 96-residue chain is UPF0235 protein Sputcn32_2690 (96 aa).

The protein belongs to the UPF0235 family.

This chain is UPF0235 protein Sputcn32_2690, found in Shewanella putrefaciens (strain CN-32 / ATCC BAA-453).